Consider the following 374-residue polypeptide: Alcohol dehydrogenase class-3 (374 aa).

Residue Ser-2 is modified to N-acetylserine. Zn(2+) is bound by residues Cys-45, His-67, Cys-97, Cys-100, Cys-103, Cys-111, and Cys-174. The residue at position 233 (Lys-233) is an N6-succinyllysine. Position 247 is a phosphoserine (Ser-247). Lys-315 is modified (N6-succinyllysine). Ser-324 and Ser-351 each carry phosphoserine.

The protein belongs to the zinc-containing alcohol dehydrogenase family. Class-III subfamily. In terms of assembly, homodimer. The cofactor is Zn(2+).

Its subcellular location is the cytoplasm. The catalysed reaction is a primary alcohol + NAD(+) = an aldehyde + NADH + H(+). It carries out the reaction a secondary alcohol + NAD(+) = a ketone + NADH + H(+). The enzyme catalyses S-(hydroxymethyl)glutathione + NADP(+) = S-formylglutathione + NADPH + H(+). It catalyses the reaction S-(hydroxymethyl)glutathione + NAD(+) = S-formylglutathione + NADH + H(+). The catalysed reaction is 20-oxo-(5Z,8Z,11Z,14Z)-eicosatetraenoate + NAD(+) + H2O = (5Z,8Z,11Z,14Z)-eicosatetraenedioate + NADH + 2 H(+). It carries out the reaction 20-hydroxy-(5Z,8Z,11Z,14Z)-eicosatetraenoate + NAD(+) = 20-oxo-(5Z,8Z,11Z,14Z)-eicosatetraenoate + NADH + H(+). The enzyme catalyses S-nitrosoglutathione + NADH + H(+) = S-(hydroxysulfenamide)glutathione + NAD(+). Catalyzes the oxidation of long-chain primary alcohols and the oxidation of S-(hydroxymethyl) glutathione. Also oxidizes long chain omega-hydroxy fatty acids, such as 20-HETE, producing both the intermediate aldehyde, 20-oxoarachidonate and the end product, a dicarboxylic acid, (5Z,8Z,11Z,14Z)-eicosatetraenedioate. Class-III ADH is remarkably ineffective in oxidizing ethanol. Required for clearance of cellular formaldehyde, a cytotoxic and carcinogenic metabolite that induces DNA damage. Also acts as a S-nitroso-glutathione reductase by catalyzing the NADH-dependent reduction of S-nitrosoglutathione, thereby regulating protein S-nitrosylation. The polypeptide is Alcohol dehydrogenase class-3 (Equus caballus (Horse)).